Here is a 183-residue protein sequence, read N- to C-terminus: Beta-defensin 129 (183 aa).

The signal sequence occupies residues 1–19 (MKLLFPIFASLMLQYQVNT). Disulfide bonds link cysteine 27–cysteine 53, cysteine 34–cysteine 48, and cysteine 38–cysteine 54. A disordered region spans residues 141 to 183 (TATSTKSNTKESRDSATASSPPAPPPPNILPTPSLELEEAEEQ). Positions 161-170 (PPAPPPPNIL) are enriched in pro residues.

It belongs to the beta-defensin family.

Its subcellular location is the secreted. Functionally, has antibacterial activity. In Gorilla gorilla gorilla (Western lowland gorilla), this protein is Beta-defensin 129 (DEFB129).